The chain runs to 353 residues: 2-Hydroxyacid oxidase 2 (353 aa).

In terms of domain architecture, FMN hydroxy acid dehydrogenase spans 2–353 (PLVCLTDFRE…NQDLIQFSRL (352 aa)). Residues 77 to 79 (PTG), S106, and Q128 each bind FMN. An a 2-oxocarboxylate-binding site is contributed by Y130. Residue T156 participates in FMN binding. Position 165 (R165) interacts with a 2-oxocarboxylate. K224 contacts FMN. The Proton acceptor role is filled by H248. A 2-oxocarboxylate is bound at residue R251. FMN-binding positions include 279–283 (DGGIR) and 302–303 (GR). A Microbody targeting signal motif is present at residues 351 to 353 (SRL).

Belongs to the FMN-dependent alpha-hydroxy acid dehydrogenase family. As to quaternary structure, homotetramer. Requires FMN as cofactor.

It localises to the peroxisome. It catalyses the reaction a (2S)-2-hydroxycarboxylate + O2 = a 2-oxocarboxylate + H2O2. The catalysed reaction is 2-hydroxyhexadecanoate + O2 = 2-oxohexadecanoate + H2O2. The enzyme catalyses 2-hydroxyoctanoate + O2 = 2-oxooctanoate + H2O2. Its pathway is lipid metabolism; fatty acid metabolism. Oxidase that catalyzes the oxidation of medium and long chain hydroxyacids such as 2-hydroxyhexadecanoate and 2-hydroxyoctanoate, to the correspondong 2-oxoacids. Its role in the oxidation of 2-hydroxy fatty acids may contribute to the general pathway of fatty acid alpha-oxidation. Active in vitro with the artificial electron acceptor 2,6-dichlorophenolindophenol (DCIP), but O2 is believed to be the physiological electron acceptor, leading to the production of H2O2. In Bos taurus (Bovine), this protein is 2-Hydroxyacid oxidase 2 (HAO2).